Here is a 152-residue protein sequence, read N- to C-terminus: Large ribosomal subunit protein bL9 (152 aa).

The protein belongs to the bacterial ribosomal protein bL9 family.

Its function is as follows. Binds to the 23S rRNA. The protein is Large ribosomal subunit protein bL9 of Prochlorococcus marinus (strain SARG / CCMP1375 / SS120).